The sequence spans 159 residues: Serine-protein kinase RsbW (159 aa).

The protein belongs to the anti-sigma-factor family.

The enzyme catalyses L-seryl-[protein] + ATP = O-phospho-L-seryl-[protein] + ADP + H(+). The catalysed reaction is L-threonyl-[protein] + ATP = O-phospho-L-threonyl-[protein] + ADP + H(+). Its function is as follows. Negative regulator of sigma-B activity. Phosphorylates and inactivates its specific antagonist protein, RsbV. Upon phosphorylation of RsbV, RsbW is released and binds to sigma-B, thereby blocking its ability to form an RNA polymerase holoenzyme (E-sigma-B). The polypeptide is Serine-protein kinase RsbW (Staphylococcus aureus (strain Newman)).